The sequence spans 31 residues: Cytochrome b6-f complex subunit 6 (31 aa).

The chain crosses the membrane as a helical span at residues 4–26; that stretch reads ITSYFGFLLAASTITSALLIGLS.

This sequence belongs to the PetL family. In terms of assembly, the 4 large subunits of the cytochrome b6-f complex are cytochrome b6, subunit IV (17 kDa polypeptide, PetD), cytochrome f and the Rieske protein, while the 4 small subunits are PetG, PetL, PetM and PetN. The complex functions as a dimer.

Its subcellular location is the plastid. The protein resides in the chloroplast thylakoid membrane. Component of the cytochrome b6-f complex, which mediates electron transfer between photosystem II (PSII) and photosystem I (PSI), cyclic electron flow around PSI, and state transitions. PetL is important for photoautotrophic growth as well as for electron transfer efficiency and stability of the cytochrome b6-f complex. In Chloranthus spicatus (Chulantree), this protein is Cytochrome b6-f complex subunit 6.